A 95-amino-acid polypeptide reads, in one-letter code: uncharacterized protein (95 aa).

A run of 3 helical transmembrane segments spans residues 3–23 (YTVL…GFSF), 35–55 (ILFL…MMLT), and 63–83 (MLGV…VMII).

It localises to the cell membrane. This is an uncharacterized protein from Mycoplasma pneumoniae (strain ATCC 29342 / M129 / Subtype 1) (Mycoplasmoides pneumoniae).